A 275-amino-acid chain; its full sequence is Phosphonoacetaldehyde hydrolase (275 aa).

Aspartate 15 acts as the Nucleophile in catalysis. Positions 15 and 17 each coordinate Mg(2+). Lysine 56 functions as the Schiff-base intermediate with substrate in the catalytic mechanism. Aspartate 189 serves as a coordination point for Mg(2+).

Belongs to the HAD-like hydrolase superfamily. PhnX family. Homodimer. The cofactor is Mg(2+).

The enzyme catalyses phosphonoacetaldehyde + H2O = acetaldehyde + phosphate + H(+). Functionally, involved in phosphonate degradation. The protein is Phosphonoacetaldehyde hydrolase of Pseudomonas putida (strain W619).